Here is a 2376-residue protein sequence, read N- to C-terminus: Cell morphogenesis protein PAG1 (2376 aa).

Residues 1–30 (MASRFTFPPQRDQGIGFTFPPTNKAEGSSN) form a disordered region. Residue Ser-141 is modified to Phosphoserine. Residues 275 to 294 (SSSNTTSKYKHNNNTNNLPG) are disordered. A Phosphoserine modification is found at Ser-1144. Thr-2264 bears the Phosphothreonine mark. A phosphoserine mark is found at Ser-2267 and Ser-2355.

It to S.pombe mor2. Associates with CBK1.

Its function is as follows. Seems to play a role in cell morphogenesis. The polypeptide is Cell morphogenesis protein PAG1 (TAO3) (Saccharomyces cerevisiae (strain ATCC 204508 / S288c) (Baker's yeast)).